Here is a 32-residue protein sequence, read N- to C-terminus: Periplasmic [NiFe] hydrogenase small subunit (32 aa).

Residues Cys-17 and Cys-20 each contribute to the [4Fe-4S] cluster site.

The protein belongs to the [NiFe]/[NiFeSe] hydrogenase small subunit family. Heterodimer of a large and a small subunit. It depends on [3Fe-4S] cluster as a cofactor. The cofactor is [4Fe-4S] cluster.

It localises to the periplasm. It carries out the reaction 2 Fe(III)-[cytochrome c3] + H2 = 2 Fe(II)-[cytochrome c3] + 2 H(+). This is Periplasmic [NiFe] hydrogenase small subunit (hydA) from Desulfovibrio multispirans.